We begin with the raw amino-acid sequence, 331 residues long: Probable cytosolic iron-sulfur protein assembly protein Ciao1 (331 aa).

WD repeat units follow at residues 12–51 (GHKGRIWGVAWHPKGNSFASCGEDKAIRIWSQSGNTWTTK), 57–96 (GHKRTIREVRWSPCGEYLASASFDATTAIWSKHECNATLE), 97–136 (GHENEVKSVSWSQSGGLLATCSRDKSVWIWEVAGDDEFEC), 142–181 (AHTQDVKRVVWHPSKEILASASYDNTIKMYAESALDSDWD), 188–227 (SHTSTVWSIDFEADGERLVSCSDDTTLKIWRAYHPGNEAG), 246–285 (QHSRAVYDVSWCKLTGLIASACGDDGIRIFKESSDSKRDE), and 297–331 (AHEQDVNAVEWNPVTAGQLISCSDDGTIKIWKLQE).

The protein belongs to the WD repeat CIA1 family.

In terms of biological role, essential component of the cytosolic iron-sulfur (Fe/S) protein assembly machinery. Required for the maturation of extramitochondrial Fe/S proteins. This Drosophila grimshawi (Hawaiian fruit fly) protein is Probable cytosolic iron-sulfur protein assembly protein Ciao1.